We begin with the raw amino-acid sequence, 251 residues long: Small ribosomal subunit protein uS3 (251 aa).

Residues 39–109 (IRNYVQARLK…EVKIDVIEVI (71 aa)) enclose the KH type-2 domain. Basic and acidic residues predominate over residues 222 to 239 (LKKIKDRRGEQRSRGRDS). The segment at 222–251 (LKKIKDRRGEQRSRGRDSRNRRRRKPRQTT) is disordered. Over residues 240-251 (RNRRRRKPRQTT) the composition is skewed to basic residues.

This sequence belongs to the universal ribosomal protein uS3 family. In terms of assembly, part of the 30S ribosomal subunit. Forms a tight complex with proteins S10 and S14.

Functionally, binds the lower part of the 30S subunit head. Binds mRNA in the 70S ribosome, positioning it for translation. This chain is Small ribosomal subunit protein uS3, found in Prosthecochloris aestuarii (strain DSM 271 / SK 413).